Here is a 429-residue protein sequence, read N- to C-terminus: Adenylosuccinate synthetase (429 aa).

Residues 12–18 and 40–42 contribute to the GTP site; these read GDEGKGK and GHT. D13 (proton acceptor) is an active-site residue. Residues D13 and G40 each coordinate Mg(2+). IMP contacts are provided by residues 13–16, 38–41, T129, R143, Q223, T238, and R302; these read DEGK and NAGH. H41 functions as the Proton donor in the catalytic mechanism. Residue 298–304 participates in substrate binding; it reads VVTGRKR. Residues R304, 330–332, and 412–414 each bind GTP; these read KLD and STS.

Belongs to the adenylosuccinate synthetase family. In terms of assembly, homodimer. Mg(2+) serves as cofactor.

It is found in the cytoplasm. The catalysed reaction is IMP + L-aspartate + GTP = N(6)-(1,2-dicarboxyethyl)-AMP + GDP + phosphate + 2 H(+). Its pathway is purine metabolism; AMP biosynthesis via de novo pathway; AMP from IMP: step 1/2. In terms of biological role, plays an important role in the de novo pathway of purine nucleotide biosynthesis. Catalyzes the first committed step in the biosynthesis of AMP from IMP. This is Adenylosuccinate synthetase from Maricaulis maris (strain MCS10) (Caulobacter maris).